We begin with the raw amino-acid sequence, 426 residues long: 3-phosphoshikimate 1-carboxyvinyltransferase (426 aa).

3-phosphoshikimate-binding residues include Lys21, Ser22, and Arg26. Lys21 is a binding site for phosphoenolpyruvate. Phosphoenolpyruvate-binding residues include Gly91 and Arg119. Residues Ser162, Ser163, Gln164, Ser190, Asp304, and Lys331 each contribute to the 3-phosphoshikimate site. Gln164 provides a ligand contact to phosphoenolpyruvate. Asp304 functions as the Proton acceptor in the catalytic mechanism. Phosphoenolpyruvate-binding residues include Arg335, Arg377, and Lys403.

Belongs to the EPSP synthase family. Monomer.

The protein localises to the cytoplasm. It carries out the reaction 3-phosphoshikimate + phosphoenolpyruvate = 5-O-(1-carboxyvinyl)-3-phosphoshikimate + phosphate. It participates in metabolic intermediate biosynthesis; chorismate biosynthesis; chorismate from D-erythrose 4-phosphate and phosphoenolpyruvate: step 6/7. Its function is as follows. Catalyzes the transfer of the enolpyruvyl moiety of phosphoenolpyruvate (PEP) to the 5-hydroxyl of shikimate-3-phosphate (S3P) to produce enolpyruvyl shikimate-3-phosphate and inorganic phosphate. This Clostridium kluyveri (strain ATCC 8527 / DSM 555 / NBRC 12016 / NCIMB 10680 / K1) protein is 3-phosphoshikimate 1-carboxyvinyltransferase.